The primary structure comprises 148 residues: Deoxyuridine 5'-triphosphate nucleotidohydrolase (148 aa).

Residues 68 to 70 (RSG), Asn-81, 85 to 87 (TID), and Lys-95 contribute to the substrate site.

It belongs to the dUTPase family. It depends on Mg(2+) as a cofactor.

The enzyme catalyses dUTP + H2O = dUMP + diphosphate + H(+). It participates in pyrimidine metabolism; dUMP biosynthesis; dUMP from dCTP (dUTP route): step 2/2. In terms of biological role, this enzyme is involved in nucleotide metabolism: it produces dUMP, the immediate precursor of thymidine nucleotides and it decreases the intracellular concentration of dUTP so that uracil cannot be incorporated into DNA. The polypeptide is Deoxyuridine 5'-triphosphate nucleotidohydrolase (Rickettsia akari (strain Hartford)).